The chain runs to 419 residues: Tyrosine--tRNA ligase (419 aa).

An L-tyrosine-binding site is contributed by tyrosine 34. A 'HIGH' region motif is present at residues 39–48 (PTADSLHLGN). Residues tyrosine 169 and glutamine 173 each contribute to the L-tyrosine site. A 'KMSKS' region motif is present at residues 229-233 (KFGKS). An ATP-binding site is contributed by lysine 232. Residues 353 to 419 (LTLIELLISA…GKKKNFVLTY (67 aa)) form the S4 RNA-binding domain.

It belongs to the class-I aminoacyl-tRNA synthetase family. TyrS type 1 subfamily. In terms of assembly, homodimer.

Its subcellular location is the cytoplasm. It carries out the reaction tRNA(Tyr) + L-tyrosine + ATP = L-tyrosyl-tRNA(Tyr) + AMP + diphosphate + H(+). Functionally, catalyzes the attachment of tyrosine to tRNA(Tyr) in a two-step reaction: tyrosine is first activated by ATP to form Tyr-AMP and then transferred to the acceptor end of tRNA(Tyr). The chain is Tyrosine--tRNA ligase from Lactococcus lactis subsp. cremoris (strain SK11).